The sequence spans 752 residues: DNA ligase (752 aa).

The tract at residues methionine 1–alanine 25 is disordered. NAD(+) contacts are provided by residues aspartate 91 to aspartate 95, serine 140 to leucine 141, and glutamate 170. Lysine 172 serves as the catalytic N6-AMP-lysine intermediate. Residues arginine 193, glutamate 233, lysine 350, and lysine 374 each coordinate NAD(+). Cysteine 474, cysteine 477, cysteine 493, and cysteine 499 together coordinate Zn(2+). The region spanning serine 669–leucine 752 is the BRCT domain.

It belongs to the NAD-dependent DNA ligase family. LigA subfamily. The cofactor is Mg(2+). Mn(2+) serves as cofactor.

It carries out the reaction NAD(+) + (deoxyribonucleotide)n-3'-hydroxyl + 5'-phospho-(deoxyribonucleotide)m = (deoxyribonucleotide)n+m + AMP + beta-nicotinamide D-nucleotide.. DNA ligase that catalyzes the formation of phosphodiester linkages between 5'-phosphoryl and 3'-hydroxyl groups in double-stranded DNA using NAD as a coenzyme and as the energy source for the reaction. It is essential for DNA replication and repair of damaged DNA. This is DNA ligase from Nocardioides sp. (strain ATCC BAA-499 / JS614).